The primary structure comprises 24 residues: Neurotoxin-2 (24 aa).

Residues 1 to 24 (EDGYLLNRDTGCKVSCGTCRYCND) enclose the LCN-type CS-alpha/beta domain.

The protein belongs to the long (4 C-C) scorpion toxin superfamily. Sodium channel inhibitor family. Alpha subfamily. In terms of tissue distribution, expressed by the venom gland.

It is found in the secreted. Binds to sodium channels (Nav) and inhibits the inactivation of the activated channels, thereby blocking neuronal transmission. This toxin is active against mammals. The chain is Neurotoxin-2 from Hottentotta tamulus (Eastern Indian scorpion).